Reading from the N-terminus, the 486-residue chain is Elastin-binding protein EbpS (486 aa).

Positions M1–T40 are enriched in basic and acidic residues. The segment at M1–K314 is disordered. Over S2–K204 the chain is Extracellular. The elastin-binding stretch occupies residues Q14 to E34. The span at T64–A85 shows a compositional bias: polar residues. 3 stretches are compositionally biased toward basic and acidic residues: residues E103–Y117, D126–A160, and S180–H199. Residues K204–S225 show a composition bias toward low complexity. The chain crosses the membrane as a helical span at residues G205–S225. The Cytoplasmic portion of the chain corresponds to K226–K319. Residues D233–S246 are compositionally biased toward polar residues. Positions T247–H259 are enriched in basic and acidic residues. Residues G278 to S297 are compositionally biased toward low complexity. Residues N300–K314 are compositionally biased toward basic and acidic residues. A helical transmembrane segment spans residues V320–M340. At A341–P486 the chain is on the extracellular side. The segment at E351–T440 is disordered. Residues N361–E398 are compositionally biased toward basic and acidic residues. Low complexity predominate over residues Q403 to Q431. The 49-residue stretch at Q437–I485 folds into the LysM domain.

Its subcellular location is the cell membrane. Functionally, promotes binding of soluble elastin peptides and tropoelastin to S.aureus cells although it is not able to promote bacterial adherence to immobilized elastin and, therefore, is not a microbial surface component recognizing adhesive matrix molecule (MSCRAMM). The polypeptide is Elastin-binding protein EbpS (ebpS) (Staphylococcus aureus (strain MRSA252)).